The chain runs to 357 residues: Isopentenyl-diphosphate delta-isomerase (357 aa).

13 to 14 is a substrate binding site; that stretch reads RK. FMN is bound by residues Ser-71, 72 to 74, Ser-102, and Asn-131; that span reads SMT. 102-104 contributes to the substrate binding site; the sequence is SMR. Residue Gln-166 participates in substrate binding. A Mg(2+)-binding site is contributed by Glu-167. FMN contacts are provided by residues Lys-198 and 311 to 312; that span reads AR.

The protein belongs to the IPP isomerase type 2 family. As to quaternary structure, homooctamer. Dimer of tetramers. FMN is required as a cofactor. NADPH serves as cofactor. Requires Mg(2+) as cofactor.

Its subcellular location is the cytoplasm. It catalyses the reaction isopentenyl diphosphate = dimethylallyl diphosphate. Functionally, involved in the biosynthesis of isoprenoids. Catalyzes the 1,3-allylic rearrangement of the homoallylic substrate isopentenyl (IPP) to its allylic isomer, dimethylallyl diphosphate (DMAPP). This Chlorobium chlorochromatii (strain CaD3) protein is Isopentenyl-diphosphate delta-isomerase.